A 299-amino-acid polypeptide reads, in one-letter code: Methylsterol monooxygenase 1-2 (299 aa).

A run of 3 helical transmembrane segments spans residues 39-59, 96-116, and 118-138; these read CHNILFLFLIFSLVPLPLVFI, FILVVGPLQLVSYPSIQMIEI, and SGLPLPSCMEIVAQLVVYFLV. The Fatty acid hydroxylase domain maps to 132-267; sequence LVVYFLVEDY…FTYCDYIYGT (136 aa). The Histidine box-1 motif lies at 147-151; the sequence is HRFFH. The Histidine box-2 motif lies at 160–164; the sequence is HHIHH. The helical transmembrane segment at 189-209 threads the bilayer; that stretch reads TFLGPAIAPGHMITFWLWIAL. The short motif at 239–245 is the Histidine box-3 element; it reads YHDYHHY.

The protein belongs to the sterol desaturase family. As to quaternary structure, interacts with ACBP1. Fe cation is required as a cofactor. In terms of tissue distribution, expressed in embryo sacs, pollen and trichomes. Observed in leaves, roots, siliques and flowers.

The protein resides in the endoplasmic reticulum membrane. The enzyme catalyses 4,4-dimethyl-5alpha-cholest-7-en-3beta-ol + 6 Fe(II)-[cytochrome b5] + 3 O2 + 5 H(+) = 4alpha-carboxy-4beta-methyl-5alpha-cholest-7-ene-3beta-ol + 6 Fe(III)-[cytochrome b5] + 4 H2O. The catalysed reaction is 24-methylenecycloartanol + 6 Fe(II)-[cytochrome b5] + 3 O2 + 5 H(+) = 4alpha-carboxy-4beta,14alpha-dimethyl-9beta,19-cyclo-5alpha-ergost-24(24(1))-en-3beta-ol + 6 Fe(III)-[cytochrome b5] + 4 H2O. Non-heme iron oxygenase involved in sterols biosynthesis by catalyzing the removal of the first methyl group at the C-4 position. 4,4-dimethyl-9-beta,19-cyclopropylsterols such as 24-methylenecycloartanol are the preferred substrates. Acts as a rate-limiting enzyme in the sterol pathway via interaction with ACBP1; sterols serve as lipid modulators for gene expression of homeodomain-leucine zipper IV transcription factors. Together with SMO1-1, involved in the maintenance of sterol composition to balance auxin and cytokinin activities during embryogenesis. The polypeptide is Methylsterol monooxygenase 1-2 (Arabidopsis thaliana (Mouse-ear cress)).